The chain runs to 346 residues: Dimethyladenosine transferase 1, mitochondrial (346 aa).

A mitochondrion-targeting transit peptide spans 1–27; that stretch reads MATQGVLAKYRLPPLPTIGEIIKLFNL. S-adenosyl-L-methionine is bound by residues asparagine 36, leucine 38, glycine 63, glutamate 85, lysine 86, aspartate 111, isoleucine 112, and asparagine 141.

It belongs to the class I-like SAM-binding methyltransferase superfamily. rRNA adenine N(6)-methyltransferase family. KsgA subfamily.

The protein resides in the mitochondrion. It carries out the reaction adenosine(N)/adenosine(N+1) in rRNA + 4 S-adenosyl-L-methionine = N(6)-dimethyladenosine(N)/N(6)-dimethyladenosine(N+1) in rRNA + 4 S-adenosyl-L-homocysteine + 4 H(+). Mitochondrial methyltransferase which uses S-adenosyl methionine to dimethylate two highly conserved adjacent adenosine residues (A1583 and A1584) within the loop of helix 45 at the 3-prime end of 12S rRNA, thereby regulating the assembly or stability of the small subunit of the mitochondrial ribosome. Also required for basal transcription of mitochondrial DNA, probably via its interaction with POLRMT and TFAM. Stimulates transcription independently of the methyltransferase activity. This is Dimethyladenosine transferase 1, mitochondrial (tfb1m) from Xenopus tropicalis (Western clawed frog).